A 176-amino-acid chain; its full sequence is Mediator of RNA polymerase II transcription subunit 11 (176 aa).

Residues 98–176 (SRVRELEETK…MGGDSSMSTN (79 aa)) form a disordered region. A compositionally biased stretch (basic and acidic residues) spans 99–108 (RVRELEETKA). The span at 124–154 (HAAAQQQQQQQQQQQQQQQQMQQAAQQQQQQ) shows a compositional bias: low complexity.

Belongs to the Mediator complex subunit 11 family. In terms of assembly, component of the Mediator complex, which may include CDK8, MED4, MED6, MED11, MED14, MED17, MED18, MED20, MED21, MED22, MED27, MED28, MED30 and MED31.

It is found in the nucleus. Its function is as follows. Component of the Mediator complex, a coactivator involved in the regulated transcription of nearly all RNA polymerase II-dependent genes. Mediator functions as a bridge to convey information from gene-specific regulatory proteins to the basal RNA polymerase II transcription machinery. Mediator is recruited to promoters by direct interactions with regulatory proteins and serves as a scaffold for the assembly of a functional pre-initiation complex with RNA polymerase II and the general transcription factors. The chain is Mediator of RNA polymerase II transcription subunit 11 (MED11) from Drosophila melanogaster (Fruit fly).